Here is a 195-residue protein sequence, read N- to C-terminus: MIFFSILITIFAYFLGSISSAILICKILRFPDPRNFGSKNPGATNILRIAGLKIAISVILFDILKGAIPMWLGYHLKISPIFLGATAVFSCLGHMYPIFFKFYGGKGVATAFGVLTTIDLHLSIVMISSWTLTVLSFGYSSLGAIVTAFIIPCYAWHFQSQYLLPTIIISSLVVIKHAANIKRLWHHKENRIWRK.

6 helical membrane-spanning segments follow: residues Ile-2–Ile-22, Ile-54–Tyr-74, Pro-80–Phe-100, Gly-107–Ile-127, Leu-132–Pro-152, and Ala-155–Ile-175.

The protein belongs to the PlsY family. As to quaternary structure, probably interacts with PlsX.

The protein localises to the cell inner membrane. It carries out the reaction an acyl phosphate + sn-glycerol 3-phosphate = a 1-acyl-sn-glycero-3-phosphate + phosphate. It participates in lipid metabolism; phospholipid metabolism. Catalyzes the transfer of an acyl group from acyl-phosphate (acyl-PO(4)) to glycerol-3-phosphate (G3P) to form lysophosphatidic acid (LPA). This enzyme utilizes acyl-phosphate as fatty acyl donor, but not acyl-CoA or acyl-ACP. In Blochmanniella pennsylvanica (strain BPEN), this protein is Glycerol-3-phosphate acyltransferase.